The following is a 319-amino-acid chain: Ribonucleoside-diphosphate reductase 2 subunit beta (319 aa).

Fe cation contacts are provided by Asp67, Glu98, and His101. Tyr105 is an active-site residue. The Fe cation site is built by Glu158, Glu192, and His195.

It belongs to the ribonucleoside diphosphate reductase small chain family. As to quaternary structure, tetramer of two alpha and two beta subunits. The cofactor is Fe cation.

It catalyses the reaction a 2'-deoxyribonucleoside 5'-diphosphate + [thioredoxin]-disulfide + H2O = a ribonucleoside 5'-diphosphate + [thioredoxin]-dithiol. Provides the precursors necessary for DNA synthesis. Catalyzes the biosynthesis of deoxyribonucleotides from the corresponding ribonucleotides. R2F contains the tyrosyl radical required for catalysis. The polypeptide is Ribonucleoside-diphosphate reductase 2 subunit beta (nrdF) (Salmonella typhimurium (strain LT2 / SGSC1412 / ATCC 700720)).